The primary structure comprises 444 residues: Type VII secretion system protein EssB (444 aa).

Residues 1-229 (MVKNHDPKNE…RKVGHTVFKW (229 aa)) lie on the Cytoplasmic side of the membrane. A helical membrane pass occupies residues 230 to 250 (VAIGMTTLSVLLIAFLAFLYF). The Extracellular portion of the chain corresponds to 251 to 444 (SVMKHNERIE…EKRQEAERKK (194 aa)). The segment at 366–444 (KNNGDLSNDK…EKRQEAERKK (79 aa)) is disordered. Over residues 372–444 (SNDKRSEETK…EKRQEAERKK (73 aa)) the composition is skewed to basic and acidic residues. Positions 387–443 (LQDILDKEKQVKDEKAKSEEEKAKAKDEKLKQQEENEKKQKEQAQKDKEKRQEAERK) form a coiled coil.

It belongs to the EssB family.

The protein resides in the cell membrane. Functionally, component of the type VII secretion system (Ess). Required for the secretion of EsxA. The protein is Type VII secretion system protein EssB of Staphylococcus aureus (strain MRSA252).